The primary structure comprises 313 residues: Pyrimidine-specific ribonucleoside hydrolase RihB (313 aa).

Aspartate 11 serves as the catalytic Proton acceptor. 3 residues coordinate Ca(2+): aspartate 11, aspartate 16, and valine 124. 2 residues coordinate substrate: glutamine 227 and histidine 239. Position 240 (aspartate 240) interacts with Ca(2+).

The protein belongs to the IUNH family. RihB subfamily. In terms of assembly, homotetramer. The cofactor is Ca(2+).

It carries out the reaction a pyrimidine ribonucleoside + H2O = a pyrimidine nucleobase + D-ribose. Its function is as follows. Hydrolyzes cytidine or uridine to ribose and cytosine or uracil, respectively. Has a clear preference for cytidine over uridine. Strictly specific for ribonucleosides. The protein is Pyrimidine-specific ribonucleoside hydrolase RihB of Escherichia coli (strain SE11).